The chain runs to 158 residues: SsrA-binding protein (158 aa).

This sequence belongs to the SmpB family.

It is found in the cytoplasm. In terms of biological role, required for rescue of stalled ribosomes mediated by trans-translation. Binds to transfer-messenger RNA (tmRNA), required for stable association of tmRNA with ribosomes. tmRNA and SmpB together mimic tRNA shape, replacing the anticodon stem-loop with SmpB. tmRNA is encoded by the ssrA gene; the 2 termini fold to resemble tRNA(Ala) and it encodes a 'tag peptide', a short internal open reading frame. During trans-translation Ala-aminoacylated tmRNA acts like a tRNA, entering the A-site of stalled ribosomes, displacing the stalled mRNA. The ribosome then switches to translate the ORF on the tmRNA; the nascent peptide is terminated with the 'tag peptide' encoded by the tmRNA and targeted for degradation. The ribosome is freed to recommence translation, which seems to be the essential function of trans-translation. The chain is SsrA-binding protein from Buchnera aphidicola subsp. Baizongia pistaciae (strain Bp).